We begin with the raw amino-acid sequence, 26 residues long: Metallothionein (26 aa).

Over residues M1–C14 the composition is skewed to low complexity. Positions M1–K26 are disordered. Cu(+) is bound by residues C4, C6, C12, C14, C18, C20, and C23. Positions G15 to K26 are enriched in cys residues.

This sequence belongs to the metallothionein superfamily. Type 8 family.

In Neurospora crassa (strain ATCC 24698 / 74-OR23-1A / CBS 708.71 / DSM 1257 / FGSC 987), this protein is Metallothionein (cmt).